A 448-amino-acid polypeptide reads, in one-letter code: Putative diacyglycerol O-acyltransferase MT3848 (448 aa).

H136 (proton acceptor) is an active-site residue.

It belongs to the long-chain O-acyltransferase family.

It carries out the reaction an acyl-CoA + a 1,2-diacyl-sn-glycerol = a triacyl-sn-glycerol + CoA. The protein operates within glycerolipid metabolism; triacylglycerol biosynthesis. The chain is Putative diacyglycerol O-acyltransferase MT3848 from Mycobacterium tuberculosis (strain CDC 1551 / Oshkosh).